A 143-amino-acid polypeptide reads, in one-letter code: Sirohydrochlorin cobaltochelatase (143 aa).

Residue H9 is the Proton acceptor of the active site. A Co(2+)-binding site is contributed by H9. A Ni(2+)-binding site is contributed by H9. Residues E45 and 70–75 (LAHGNH) contribute to the substrate site. Residue H75 coordinates Co(2+). A Ni(2+)-binding site is contributed by H75.

The protein belongs to the CbiX family. CbiXS subfamily. Homotetramer; dimer of dimers.

It catalyses the reaction Co-sirohydrochlorin + 2 H(+) = sirohydrochlorin + Co(2+). The enzyme catalyses Ni-sirohydrochlorin + 2 H(+) = sirohydrochlorin + Ni(2+). Its pathway is cofactor biosynthesis; adenosylcobalamin biosynthesis; cob(II)yrinate a,c-diamide from sirohydrochlorin (anaerobic route): step 1/10. In terms of biological role, catalyzes the insertion of Co(2+) into sirohydrochlorin as part of the anaerobic pathway to cobalamin biosynthesis. Involved in the biosynthesis of the unique nickel-containing tetrapyrrole coenzyme F430, the prosthetic group of methyl-coenzyme M reductase (MCR), which plays a key role in methanogenesis and anaerobic methane oxidation. Catalyzes the insertion of Ni(2+) into sirohydrochlorin to yield Ni-sirohydrochlorin. The sequence is that of Sirohydrochlorin cobaltochelatase from Methanococcus aeolicus (strain ATCC BAA-1280 / DSM 17508 / OCM 812 / Nankai-3).